Here is a 367-residue protein sequence, read N- to C-terminus: Peptide chain release factor 1 (367 aa).

Gln-238 bears the N5-methylglutamine mark.

This sequence belongs to the prokaryotic/mitochondrial release factor family. Methylated by PrmC. Methylation increases the termination efficiency of RF1.

The protein localises to the cytoplasm. Peptide chain release factor 1 directs the termination of translation in response to the peptide chain termination codons UAG and UAA. This chain is Peptide chain release factor 1, found in Dictyoglomus turgidum (strain DSM 6724 / Z-1310).